The following is a 511-amino-acid chain: Maturase K (511 aa).

It belongs to the intron maturase 2 family. MatK subfamily.

The protein localises to the plastid. It is found in the chloroplast. Usually encoded in the trnK tRNA gene intron. Probably assists in splicing its own and other chloroplast group II introns. In Pistia stratiotes (Water lettuce), this protein is Maturase K.